Consider the following 389-residue polypeptide: Calreticulin (389 aa).

Positions 1 to 13 are cleaved as a signal peptide; the sequence is MFTLFLLIALSSA. The tract at residues 12 to 189 is N-domain; it reads SAKVYFHETF…GVEKQEGKFD (178 aa). 3 residues coordinate Ca(2+): threonine 20, asparagine 52, and asparagine 53. A disulfide bridge links cysteine 96 with cysteine 130. The an alpha-D-glucoside site is built by tyrosine 100, lysine 102, tyrosine 121, and aspartate 128. 7 repeat units span residues 183–194, 202–213, 219–230, 237–248, 252–262, 266–276, and 280–290. Positions 183-248 are 4 X approximate repeats; the sequence is KQEGKFDEDW…NAKKPEEWND (66 aa). The tract at residues 190 to 301 is P-domain; that stretch reads EDWDMLAPKE…YVYDPELYKY (112 aa). The span at 213-232 shows a compositional bias: basic and acidic residues; that stretch reads DEKEIDDPNDKKPEGWDDIP. The disordered stretch occupies residues 213–256; sequence DEKEIDDPNDKKPEGWDDIPKTIVDPNAKKPEEWNDEDDGEWEA. The tract at residues 252 to 290 is 3 X approximate repeats; the sequence is GEWEAPTIENPEYKGEWKPKRIPNPAYKGEWVHPQIANP. A C-domain region spans residues 302 to 389; the sequence is DSFAYIGIDV…IKKEENKEEL (88 aa). Residue aspartate 310 coordinates an alpha-D-glucoside. Aspartate 321 provides a ligand contact to Ca(2+). A coiled-coil region spans residues 329–388; the sequence is IEEAEKEAKVILERNAAEKKMRDEIKEAEKQKEEEAKKEAEKQKEEETKEEIKKEENKEE. Residues 347–389 form a disordered region; that stretch reads KKMRDEIKEAEKQKEEEAKKEAEKQKEEETKEEIKKEENKEEL. Residues 386-389 carry the Prevents secretion from ER motif; the sequence is KEEL.

The protein belongs to the calreticulin family. Interacts (via C-terminus) with host C1q.

The protein localises to the endoplasmic reticulum lumen. It localises to the cell projection. It is found in the uropodium. The protein resides in the cell surface. Its subcellular location is the phagocytic cup. Its function is as follows. Molecular calcium-binding chaperone promoting folding, oligomeric assembly and quality control in the ER via the calreticulin/calnexin cycle. This lectin may interact transiently with almost all of the monoglucosylated glycoproteins that are synthesized in the ER. Plays a role in host cell phagocytosis, possibly by acting as a receptor for host C1q. Binding to C1q prevents the activation of the host classical complement pathway. Also, binds to apoptotic host cells independently of host C1q and collectins. The chain is Calreticulin from Entamoeba histolytica (strain ATCC 30459 / HM-1:IMSS / ABRM).